The following is a 290-amino-acid chain: ATP synthase gamma chain (290 aa).

It belongs to the ATPase gamma chain family. F-type ATPases have 2 components, CF(1) - the catalytic core - and CF(0) - the membrane proton channel. CF(1) has five subunits: alpha(3), beta(3), gamma(1), delta(1), epsilon(1). CF(0) has three main subunits: a, b and c.

It is found in the cell membrane. Produces ATP from ADP in the presence of a proton gradient across the membrane. The gamma chain is believed to be important in regulating ATPase activity and the flow of protons through the CF(0) complex. This Buchnera aphidicola subsp. Schlechtendalia chinensis protein is ATP synthase gamma chain.